The following is a 127-amino-acid chain: Fluoride-specific ion channel FluC (127 aa).

Transmembrane regions (helical) follow at residues 4–24 (LLLAVFIGGGTGSVARWLLSM), 35–55 (LGTLTANLIGAFIIGMGFAWF), 71–91 (TGFCGGLTTFSTFSAEVVFLL), and 103–123 (VFVNLLGSFAMTALAFWLFSA). Residues Gly75 and Thr78 each coordinate Na(+).

It belongs to the fluoride channel Fluc/FEX (TC 1.A.43) family.

The protein resides in the cell inner membrane. The catalysed reaction is fluoride(in) = fluoride(out). With respect to regulation, na(+) is not transported, but it plays an essential structural role and its presence is essential for fluoride channel function. Its function is as follows. Fluoride-specific ion channel. Important for reducing fluoride concentration in the cell, thus reducing its toxicity. The polypeptide is Fluoride-specific ion channel FluC (Escherichia coli O7:K1 (strain IAI39 / ExPEC)).